The primary structure comprises 76 residues: UPF0154 protein Exig_1099 (76 aa).

The helical transmembrane segment at 4 to 24 threads the bilayer; the sequence is WIWILIALLCLVAGVALGFYI. The interval 54-76 is disordered; sequence KPSQKKVNQVMRSMSGSMKSPKK.

It belongs to the UPF0154 family.

The protein localises to the cell membrane. The protein is UPF0154 protein Exig_1099 of Exiguobacterium sibiricum (strain DSM 17290 / CCUG 55495 / CIP 109462 / JCM 13490 / 255-15).